Consider the following 154-residue polypeptide: Prefoldin subunit 5 (154 aa).

Ala2 carries the post-translational modification N-acetylalanine. Lys42 carries the post-translational modification N6-acetyllysine. Ser56 carries the post-translational modification Phosphoserine.

Belongs to the prefoldin subunit alpha family. As to quaternary structure, heterohexamer of two PFD-alpha type and four PFD-beta type subunits.

The protein resides in the nucleus. Functionally, binds specifically to cytosolic chaperonin (c-CPN) and transfers target proteins to it. Binds to nascent polypeptide chain and promotes folding in an environment in which there are many competing pathways for nonnative proteins. Represses the transcriptional activity of MYC. In Pongo abelii (Sumatran orangutan), this protein is Prefoldin subunit 5 (PFDN5).